Here is a 423-residue protein sequence, read N- to C-terminus: Tegument protein UL43 (423 aa).

Over residues 1-12 (MEKTPAETTAVS) the composition is skewed to polar residues. The segment at 1–46 (MEKTPAETTAVSAGNVPRDSIPCITNVSADTRGRTRPSRPATVPQR) is disordered.

It belongs to the herpesviridae US22 family.

Its subcellular location is the virion tegument. This is Tegument protein UL43 (UL43) from Homo sapiens (Human).